Consider the following 409-residue polypeptide: U-box domain-containing protein 28 (409 aa).

The U-box domain occupies 10–84; the sequence is TVPCFFKCPI…DHWSDSINRR (75 aa). 3 ARM repeats span residues 178–218, 219–261, and 263–304; these read RLSN…FIAV, DAES…AIAS, and KRVK…AISS.

The catalysed reaction is S-ubiquitinyl-[E2 ubiquitin-conjugating enzyme]-L-cysteine + [acceptor protein]-L-lysine = [E2 ubiquitin-conjugating enzyme]-L-cysteine + N(6)-ubiquitinyl-[acceptor protein]-L-lysine.. It functions in the pathway protein modification; protein ubiquitination. In terms of biological role, functions as an E3 ubiquitin ligase. The sequence is that of U-box domain-containing protein 28 (PUB28) from Arabidopsis thaliana (Mouse-ear cress).